We begin with the raw amino-acid sequence, 337 residues long: Anthranilate phosphoribosyltransferase (337 aa).

5-phospho-alpha-D-ribose 1-diphosphate contacts are provided by residues glycine 82, 85 to 86 (GD), threonine 90, 92 to 95 (NIST), 110 to 118 (KHGGRSVSS), and serine 122. Glycine 82 is a binding site for anthranilate. Serine 94 contributes to the Mg(2+) binding site. Arginine 168 contributes to the anthranilate binding site. Aspartate 226 and glutamate 227 together coordinate Mg(2+).

The protein belongs to the anthranilate phosphoribosyltransferase family. Homodimer. Mg(2+) is required as a cofactor.

It carries out the reaction N-(5-phospho-beta-D-ribosyl)anthranilate + diphosphate = 5-phospho-alpha-D-ribose 1-diphosphate + anthranilate. Its pathway is amino-acid biosynthesis; L-tryptophan biosynthesis; L-tryptophan from chorismate: step 2/5. Catalyzes the transfer of the phosphoribosyl group of 5-phosphorylribose-1-pyrophosphate (PRPP) to anthranilate to yield N-(5'-phosphoribosyl)-anthranilate (PRA). This is Anthranilate phosphoribosyltransferase from Francisella tularensis subsp. holarctica (strain OSU18).